Consider the following 517-residue polypeptide: Ubiquitin carboxyl-terminal hydrolase 30 (517 aa).

Topologically, residues 1 to 35 (MLSSRAQAARTAADKALQRFLRTGAAVRYKVMKNW) are mitochondrial intermembrane. Residues 36–56 (GVIGGIAAALAAGIYVIWGPI) form a helical membrane-spanning segment. Over 57 to 517 (TERKKRRKGL…QQGREYRSEE (461 aa)) the chain is Cytoplasmic. In terms of domain architecture, USP spans 68–502 (PGLVNLGNTC…SAYLLFYERV (435 aa)). Cysteine 77 (nucleophile) is an active-site residue. Glycyl lysine isopeptide (Lys-Gly) (interchain with G-Cter in ubiquitin) cross-links involve residues lysine 235 and lysine 289. Residues 364 to 395 (SQHGPKATESPGSALGVQDTQAAPKPGLSQPA) are disordered. The Proton acceptor role is filled by histidine 452.

The protein belongs to the peptidase C19 family. Ubiquitinated by parkin (PRKN) at Lys-235 and Lys-289, leading to its degradation.

The protein resides in the mitochondrion outer membrane. It carries out the reaction Thiol-dependent hydrolysis of ester, thioester, amide, peptide and isopeptide bonds formed by the C-terminal Gly of ubiquitin (a 76-residue protein attached to proteins as an intracellular targeting signal).. Inhibited by the diterpenoid derivative 15-oxospiramilactone (S3). Its function is as follows. Deubiquitinating enzyme tethered to the mitochondrial outer membrane that acts as a key inhibitor of mitophagy by counteracting the action of parkin (PRKN): hydrolyzes ubiquitin attached by parkin on target proteins, such as RHOT1/MIRO1 and TOMM20, thereby blocking parkin's ability to drive mitophagy. Preferentially cleaves 'Lys-6'- and 'Lys-11'-linked polyubiquitin chains, 2 types of linkage that participate in mitophagic signaling. Does not cleave efficiently polyubiquitin phosphorylated at 'Ser-65'. Acts as a negative regulator of mitochondrial fusion by mediating deubiquitination of MFN1 and MFN2. The chain is Ubiquitin carboxyl-terminal hydrolase 30 (Usp30) from Rattus norvegicus (Rat).